Reading from the N-terminus, the 352-residue chain is UDP-N-acetylglucosamine--N-acetylmuramyl-(pentapeptide) pyrophosphoryl-undecaprenol N-acetylglucosamine transferase (352 aa).

Residues serine 195 and glutamine 287 each contribute to the UDP-N-acetyl-alpha-D-glucosamine site.

The protein belongs to the glycosyltransferase 28 family. MurG subfamily.

It is found in the cell membrane. It carries out the reaction Mur2Ac(oyl-L-Ala-gamma-D-Glu-L-Lys-D-Ala-D-Ala)-di-trans,octa-cis-undecaprenyl diphosphate + UDP-N-acetyl-alpha-D-glucosamine = beta-D-GlcNAc-(1-&gt;4)-Mur2Ac(oyl-L-Ala-gamma-D-Glu-L-Lys-D-Ala-D-Ala)-di-trans,octa-cis-undecaprenyl diphosphate + UDP + H(+). The protein operates within cell wall biogenesis; peptidoglycan biosynthesis. In terms of biological role, cell wall formation. Catalyzes the transfer of a GlcNAc subunit on undecaprenyl-pyrophosphoryl-MurNAc-pentapeptide (lipid intermediate I) to form undecaprenyl-pyrophosphoryl-MurNAc-(pentapeptide)GlcNAc (lipid intermediate II). This chain is UDP-N-acetylglucosamine--N-acetylmuramyl-(pentapeptide) pyrophosphoryl-undecaprenol N-acetylglucosamine transferase, found in Streptococcus pneumoniae serotype 4 (strain ATCC BAA-334 / TIGR4).